A 327-amino-acid polypeptide reads, in one-letter code: Phenylalanine--tRNA ligase alpha subunit (327 aa).

E252 is a binding site for Mg(2+).

Belongs to the class-II aminoacyl-tRNA synthetase family. Phe-tRNA synthetase alpha subunit type 1 subfamily. As to quaternary structure, tetramer of two alpha and two beta subunits. Mg(2+) serves as cofactor.

The protein localises to the cytoplasm. The enzyme catalyses tRNA(Phe) + L-phenylalanine + ATP = L-phenylalanyl-tRNA(Phe) + AMP + diphosphate + H(+). This Klebsiella pneumoniae subsp. pneumoniae (strain ATCC 700721 / MGH 78578) protein is Phenylalanine--tRNA ligase alpha subunit.